A 66-amino-acid polypeptide reads, in one-letter code: Large ribosomal subunit protein eL24 (66 aa).

Zn(2+) is bound by residues Cys7, Cys10, Cys33, and Cys37. The C4-type zinc finger occupies 7 to 37; the sequence is CSYCGKPFEPGTGKMYVRNDGRVLFFCSRKC.

This sequence belongs to the eukaryotic ribosomal protein eL24 family. In terms of assembly, part of the 50S ribosomal subunit. Forms a cluster with proteins L3 and L14. Zn(2+) is required as a cofactor.

Functionally, binds to the 23S rRNA. This is Large ribosomal subunit protein eL24 from Pyrococcus furiosus (strain ATCC 43587 / DSM 3638 / JCM 8422 / Vc1).